Here is a 471-residue protein sequence, read N- to C-terminus: ATP synthase subunit beta (471 aa).

154–161 contributes to the ATP binding site; the sequence is GGAGVGKT.

This sequence belongs to the ATPase alpha/beta chains family. F-type ATPases have 2 components, CF(1) - the catalytic core - and CF(0) - the membrane proton channel. CF(1) has five subunits: alpha(3), beta(3), gamma(1), delta(1), epsilon(1). CF(0) has three main subunits: a(1), b(2) and c(9-12). The alpha and beta chains form an alternating ring which encloses part of the gamma chain. CF(1) is attached to CF(0) by a central stalk formed by the gamma and epsilon chains, while a peripheral stalk is formed by the delta and b chains.

The protein localises to the cell membrane. The catalysed reaction is ATP + H2O + 4 H(+)(in) = ADP + phosphate + 5 H(+)(out). In terms of biological role, produces ATP from ADP in the presence of a proton gradient across the membrane. The catalytic sites are hosted primarily by the beta subunits. This Mesomycoplasma hyopneumoniae (strain J / ATCC 25934 / NCTC 10110) (Mycoplasma hyopneumoniae) protein is ATP synthase subunit beta.